Consider the following 157-residue polypeptide: DNA-binding protein MNB1B (157 aa).

3 disordered regions span residues 1–45 (MKGA…KRAP), 59–87 (FKEKNPKNKSVAAVGKAAGDRWKSLSESD), and 109–157 (YNKG…DDDE). Composition is skewed to basic and acidic residues over residues 10-27 (AKADAKLAVKSKGAEKPA) and 76-87 (AGDRWKSLSESD). A DNA-binding region (HMG box) is located at residues 41–110 (PKRAPSAFFV…EYNKAIAAYN (70 aa)). Composition is skewed to acidic residues over residues 124-133 (EEEEEDEEES) and 141-157 (NDEDDEEGSEEDEDDDE). The residue at position 149 (serine 149) is a Phosphoserine; by CK2.

Expressed in all tissues examined.

The protein resides in the nucleus. Recognizes an AAGG motif at the MNF1-binding site. This is DNA-binding protein MNB1B (MNB1B) from Zea mays (Maize).